Consider the following 689-residue polypeptide: Transketolase (689 aa).

Residue histidine 56 participates in substrate binding. Residues histidine 96 and 144-146 (GNL) each bind thiamine diphosphate. A Mg(2+)-binding site is contributed by aspartate 185. The thiamine diphosphate site is built by glycine 186 and asparagine 215. Mg(2+) contacts are provided by asparagine 215 and isoleucine 217. Substrate-binding residues include histidine 289, arginine 380, and serine 407. Histidine 289 provides a ligand contact to thiamine diphosphate. Residue glutamate 434 is the Proton donor of the active site. Phenylalanine 460 is a thiamine diphosphate binding site. The substrate site is built by histidine 484, aspartate 492, and arginine 543.

It belongs to the transketolase family. In terms of assembly, homodimer. It depends on Mg(2+) as a cofactor. The cofactor is Ca(2+). Mn(2+) is required as a cofactor. Co(2+) serves as cofactor. Requires thiamine diphosphate as cofactor.

The enzyme catalyses D-sedoheptulose 7-phosphate + D-glyceraldehyde 3-phosphate = aldehydo-D-ribose 5-phosphate + D-xylulose 5-phosphate. Catalyzes the transfer of a two-carbon ketol group from a ketose donor to an aldose acceptor, via a covalent intermediate with the cofactor thiamine pyrophosphate. The chain is Transketolase (tkt) from Aquifex aeolicus (strain VF5).